Reading from the N-terminus, the 624-residue chain is Alpha-galactosidase 3 (624 aa).

A signal peptide spans 1-22 (MSPSAAVLIPLAAAVLLRPVVG). N-linked (GlcNAc...) asparagine glycans are attached at residues asparagine 37, asparagine 56, asparagine 197, asparagine 259, and asparagine 293. The active-site Nucleophile is the aspartate 347. A glycan (N-linked (GlcNAc...) asparagine) is linked at asparagine 393. Catalysis depends on aspartate 412, which acts as the Proton donor. Asparagine 469 carries N-linked (GlcNAc...) asparagine glycosylation.

Belongs to the glycosyl hydrolase 27 family.

It is found in the secreted. It carries out the reaction Hydrolysis of terminal, non-reducing alpha-D-galactose residues in alpha-D-galactosides, including galactose oligosaccharides, galactomannans and galactolipids.. Alpha-galactosidase involved in the degradation of simple oligosaccharides like melibiose, raffinose and stachyose, and of polymeric galacto(gluco)mannans. In Hypocrea jecorina (Trichoderma reesei), this protein is Alpha-galactosidase 3 (agl3).